The chain runs to 750 residues: MLRFIIFFSLFIHLCVAAPQTPAAAAAVPAKKWLTLNGQEPAVVARGGFSGLFPESSASANDLAIGTSSPGLTMLCNLQMTKDGVGLCLSDIILDNATTISSVFPKAQKTYKVNGQDLKGWFVLDYDADTIFNNVTLVQNIFSRPSIFDGQMSVSAVEDVLGTKPPKFWLSVQYDAFYMEHKLSPAEYLRSLQFRGINVISSPEIGFLKSIGMDAGRAKTKLIFEFKDPEAVEPTTNKKYSEIQQNLAAIKAFASGVLVPKDYIWPIDSAKYLKPATTFVADAHKAGLEVYASGFANDLRTSFNYSYDPSAEYLQFVDNGQFSVDGVITDFPPTASQSITCFSHQNGNLPKAGHALVITHNGASGDYPGCTDLAYQKAVDDGADVIDCSVQMSKDGIAFCHDAADLTASTTAMTIFMSRATSVPEIQPTNGIFSFDLTWAEIQSVKPQIENPFTATGFQRNPANKNAGKFITLADFLDFSKAKAVTGVMINIENAAYLASKKGLGVVDAVKSALAKSTLDKQSTQKVLIQSDDSSVLASFEAVPPYTRVLSIDKEIGGAPKPSVDEIKKYAEAVNLLRTSLVTVSQSFTTGKTNVVEEMHKGNISVYVSVLRNEYISVAFDYFSDPTIELATFISGSGVDGVITEFPATATRYLKSPCSDLNKEQPYAILPAEAGGLVVVADKEAQPPASAPNPPLEAKDVIDPPLPPVANLAASNATGGAQSHPPPASGTVANAANLGLSLLAMLALGV.

An N-terminal signal peptide occupies residues 1–17 (MLRFIIFFSLFIHLCVA). 2 consecutive GP-PDE domains span residues 41–339 (PAVV…SQSI) and 355–654 (ALVI…TRYL). N-linked (GlcNAc...) asparagine glycosylation is found at Asn134, Asn304, Asn603, and Asn716.

Belongs to the glycerophosphoryl diester phosphodiesterase family. In terms of tissue distribution, expressed in flowers and siliques.

It catalyses the reaction a sn-glycero-3-phosphodiester + H2O = an alcohol + sn-glycerol 3-phosphate + H(+). The polypeptide is Glycerophosphodiester phosphodiesterase GDPDL7 (Arabidopsis thaliana (Mouse-ear cress)).